The sequence spans 161 residues: Cyclic pyranopterin monophosphate synthase (161 aa).

Substrate is bound by residues 75 to 77 (LCH) and 113 to 114 (ME). Residue Asp-128 is part of the active site.

The protein belongs to the MoaC family. Homohexamer; trimer of dimers.

It catalyses the reaction (8S)-3',8-cyclo-7,8-dihydroguanosine 5'-triphosphate = cyclic pyranopterin phosphate + diphosphate. It participates in cofactor biosynthesis; molybdopterin biosynthesis. Functionally, catalyzes the conversion of (8S)-3',8-cyclo-7,8-dihydroguanosine 5'-triphosphate to cyclic pyranopterin monophosphate (cPMP). The polypeptide is Cyclic pyranopterin monophosphate synthase (Escherichia coli O139:H28 (strain E24377A / ETEC)).